A 572-amino-acid polypeptide reads, in one-letter code: uncharacterized protein (572 aa).

The tract at residues 553–572 is disordered; sequence PSPAPKPVTVRKKKGNSPIS. Basic residues predominate over residues 561–572; sequence TVRKKKGNSPIS.

This is an uncharacterized protein from Homo sapiens (Human).